Reading from the N-terminus, the 158-residue chain is Ribosomal RNA large subunit methyltransferase H (158 aa).

S-adenosyl-L-methionine is bound by residues Leu76, Gly107, and 126 to 131 (LSGLTM).

The protein belongs to the RNA methyltransferase RlmH family. Homodimer.

The protein resides in the cytoplasm. The catalysed reaction is pseudouridine(1915) in 23S rRNA + S-adenosyl-L-methionine = N(3)-methylpseudouridine(1915) in 23S rRNA + S-adenosyl-L-homocysteine + H(+). In terms of biological role, specifically methylates the pseudouridine at position 1915 (m3Psi1915) in 23S rRNA. This is Ribosomal RNA large subunit methyltransferase H from Teredinibacter turnerae (strain ATCC 39867 / T7901).